The primary structure comprises 33 residues: RNA-directed RNA polymerase beta chain (33 aa).

As to quaternary structure, the polymerase complex is composed of four chains, the three other proteins of the complex (alpha, gamma, and delta chains) are supplied by the host cell.

It carries out the reaction RNA(n) + a ribonucleoside 5'-triphosphate = RNA(n+1) + diphosphate. Functionally, this enzyme is part of the viral RNA-dependent RNA polymerase complex. The polypeptide is RNA-directed RNA polymerase beta chain (Escherichia phage BZ13 (Bacteriophage BZ13)).